Consider the following 568-residue polypeptide: Protein phosphatase 1 regulatory inhibitor subunit 16B (568 aa).

A coiled-coil region spans residues Glu-15–Arg-55. Phosphoserine is present on Ser-69. ANK repeat units lie at residues Asp-100 to Ala-129, Glu-133 to Ala-162, Gln-228 to Val-257, and Asp-261 to Ala-290. Positions Arg-327–Val-346 are disordered. Ser-333, Ser-337, and Ser-350 each carry phosphoserine. A compositionally biased stretch (low complexity) spans Ser-333 to Arg-342. The segment at Ser-373 to Glu-404 is disordered. Residues Asp-386–Glu-404 are compositionally biased toward basic and acidic residues. Ser-477 carries the phosphoserine modification. The interval Gly-504–Arg-525 is disordered. An ANK 5 repeat occupies Ser-531 to Lys-560. Cys-564 carries the S-palmitoyl cysteine lipid modification. Residue Cys-565 is modified to Cysteine methyl ester. The S-farnesyl cysteine moiety is linked to residue Cys-565. Residues Arg-566–Ser-568 constitute a propeptide, removed in mature form.

As to quaternary structure, interacts with PPP1CA, PPP1CB and MSN. Interacts (via its fourth ankyrin repeat) with the mature dimeric form of RPSA/LAMR1. Interacts with EEF1A1. Interacts with PTEN. Interacts with ECE1. Post-translationally, phosphorylated by PKA and, after PKA priming, by GSK3B. Phosphorylation by GSK3B reduces its association with PP1C and enhances PP1C activity. Dephosphorylation by its associated PP1C results in enhanced association with PP1C, but reduced PP1C activity.

The protein localises to the cell membrane. It localises to the nucleus. The protein resides in the cell projection. Regulator of protein phosphatase 1 (PP1) that acts as a positive regulator of pulmonary endothelial cell (EC) barrier function. Protects the endothelial barrier from lipopolysaccharide (LPS)-induced vascular leakage. Involved in the regulation of the PI3K/AKT signaling pathway. Involved in the regulation of angiogenesis and endothelial cell proliferation through the control of ECE1 dephosphorylation, trafficking and activity. Involved in the regulation of endothelial cell filopodia extension. May be a downstream target for TGF-beta1 signaling cascade in endothelial cells. Involved in PKA-mediated moesin dephosphorylation which is important in EC barrier protection against thrombin stimulation. Promotes the interaction of PPP1CA with RPSA/LAMR1 and in turn facilitates the dephosphorylation of RPSA/LAMR1. Involved in the dephosphorylation of EEF1A1. This is Protein phosphatase 1 regulatory inhibitor subunit 16B (PPP1R16B) from Bos taurus (Bovine).